Consider the following 914-residue polypeptide: Effector protein hopAE1 (914 aa).

Over residues 1 to 13 the composition is skewed to polar residues; that stretch reads MMPSQITRSSHSS. Residues 1–31 form a disordered region; sequence MMPSQITRSSHSSLPEVAPASGDAAGVSEQT.

This sequence belongs to the HopW family.

The protein localises to the secreted. The polypeptide is Effector protein hopAE1 (hopAE1) (Pseudomonas syringae pv. syringae (strain B728a)).